The following is a 381-amino-acid chain: (S)-scoulerine 9-O-methyltransferase (381 aa).

The S-adenosyl-L-methionine site is built by glycine 223, glutamate 246, aspartate 266, methionine 267, and lysine 280. Histidine 284 acts as the Proton acceptor in catalysis.

Belongs to the class I-like SAM-binding methyltransferase superfamily. Cation-independent O-methyltransferase family. COMT subfamily.

The catalysed reaction is (S)-scoulerine + S-adenosyl-L-methionine = (S)-tetrahydrocolumbamine + S-adenosyl-L-homocysteine + H(+). Its function is as follows. Produces a precursor of protoberberine alkaloids. The chain is (S)-scoulerine 9-O-methyltransferase (SMT) from Coptis japonica (Japanese goldthread).